We begin with the raw amino-acid sequence, 300 residues long: UDP-N-acetylenolpyruvoylglucosamine reductase (300 aa).

Positions 22-190 (RVGGAAEWLA…LSARFRLQPG (169 aa)) constitute an FAD-binding PCMH-type domain. R169 is a catalytic residue. S220 acts as the Proton donor in catalysis. Residue E290 is part of the active site.

This sequence belongs to the MurB family. The cofactor is FAD.

It localises to the cytoplasm. It catalyses the reaction UDP-N-acetyl-alpha-D-muramate + NADP(+) = UDP-N-acetyl-3-O-(1-carboxyvinyl)-alpha-D-glucosamine + NADPH + H(+). It functions in the pathway cell wall biogenesis; peptidoglycan biosynthesis. Cell wall formation. This chain is UDP-N-acetylenolpyruvoylglucosamine reductase, found in Synechococcus sp. (strain CC9605).